The chain runs to 563 residues: MSDFVDRVTVHVKGGDGGNGSAGIRREKYKPLAGPNGGNGGDGGSVVFVADRNATSLLDYRFMPHRVAGSGTMGLGDNKDGSKGEDLILPVPCGTVVFEARGEQGKAKHPGAQLADLRHEGDRCVVAQGGAGGLGNIALANKTRRAPGFALLGELGEERDVILELKSIADVALVGFPSAGKSSLIAAMSSAKPKIADYPFTTLVPNLGVVIAGDSRYTIADVPGLIPGASEGKGLGLEFLRHIERTEIIAHVIDCATLEPDRDPMSDYHALENELALYADKLELPLGAIPIPERPRIVILNKIDVPEAKELAEFVRPEFEKLGLKVFEISTASHEGLKELNFALSALVHEMREEVANREQAEEEARVVIKPLETKGRRPRRADEGGSALEFTVERRELGNGEVFFEVRGVKPERWVMQTNFDNDEAVGYLADRLAKLGVEDELRRKGAHPGDEVRIGRGARMVEFDWDPTISAGAEMLDGSNLGARGKDLRLEELDPRTHRRSNAERRAQYHEMMDARAAVRDAMMAERKAGHWADPTVDDDRHDETSLFGHGESSEDGETEE.

The region spanning 2–168 is the Obg domain; sequence SDFVDRVTVH…RDVILELKSI (167 aa). Residues 169–349 enclose the OBG-type G domain; sequence ADVALVGFPS…LNFALSALVH (181 aa). GTP-binding positions include 175–182, 200–204, 221–224, 301–304, and 330–332; these read GFPSAGKS, FTTLV, DVPG, NKID, and STA. The Mg(2+) site is built by Ser-182 and Thr-202. Positions 383–469 constitute an OCT domain; that stretch reads DEGGSALEFT…ARMVEFDWDP (87 aa). The segment at 529-563 is disordered; it reads RKAGHWADPTVDDDRHDETSLFGHGESSEDGETEE.

This sequence belongs to the TRAFAC class OBG-HflX-like GTPase superfamily. OBG GTPase family. As to quaternary structure, monomer. Mg(2+) serves as cofactor.

It localises to the cytoplasm. Functionally, an essential GTPase which binds GTP, GDP and possibly (p)ppGpp with moderate affinity, with high nucleotide exchange rates and a fairly low GTP hydrolysis rate. Plays a role in control of the cell cycle, stress response, ribosome biogenesis and in those bacteria that undergo differentiation, in morphogenesis control. In Bifidobacterium longum (strain NCC 2705), this protein is GTPase Obg.